The primary structure comprises 20 residues: Hemocyanin subunit II (20 aa).

Positions 1-20 (DVVASSTAHKQQDINHLLDK) are disordered. A compositionally biased stretch (basic and acidic residues) spans 10–20 (KQQDINHLLDK).

The protein belongs to the tyrosinase family. Hemocyanin subfamily. Composed of 3 major subunits (IB, II and III) and 1 minor subunit (IA) which form homohexamers and heterohexamers. May also form larger structures. In terms of tissue distribution, hemolymph.

The protein resides in the secreted. Its subcellular location is the extracellular space. Functionally, hemocyanins are copper-containing oxygen carriers occurring freely dissolved in the hemolymph of many mollusks and arthropods. This chain is Hemocyanin subunit II, found in Panulirus japonicus (Japanese spiny lobster).